Consider the following 913-residue polypeptide: Calcium-activated chloride channel regulator 1 (913 aa).

Positions Met-1 to Ser-21 are cleaved as a signal peptide. Residues Asp-46–His-199 form a metalloprotease domain region. His-156 is a Zn(2+) binding site. Residue Glu-157 is part of the active site. Residues His-160 and Asn-167 each contribute to the Zn(2+) site. The region spanning Ile-306–Leu-475 is the VWFA domain. 7 N-linked (GlcNAc...) asparagine glycosylation sites follow: Asn-503, Asn-514, Asn-770, Asn-804, Asn-810, Asn-836, and Asn-885.

The protein belongs to the CLCR family. Glycosylated. In terms of processing, the translation product is autoproteolytically cleaved by the metalloprotease domain in the endoplasmic reticulum into a N-terminal and a C-terminal products that remain physically associated with each other. The cleavage is necessary for calcium-activated chloride channel (CaCC) activation activity. Expressed in mucin-producing cells in the respiratory and intestinal tracts, cutaneous sweat glands, and renal mucous glands (at protein level). Strong overexpression in the airways of horses with recurrent airway obstruction (at protein level).

It is found in the secreted. Its subcellular location is the extracellular space. Functionally, may be involved in mediating calcium-activated chloride conductance. May play critical roles in goblet cell metaplasia, mucus hypersecretion, cystic fibrosis and AHR. May be involved in the regulation of mucus production and/or secretion by goblet cells. Involved in the regulation of tissue inflammation in the innate immune response. May play a role as a tumor suppressor. Induces MUC5AC. The sequence is that of Calcium-activated chloride channel regulator 1 (CLCA1) from Equus caballus (Horse).